The following is a 62-amino-acid chain: Sperm histone (62 aa).

Residues 1 to 62 are disordered; that stretch reads MARYRRSRTR…GSRRRRRRRY (62 aa). Phosphothreonine is present on threonine 9.

The protein belongs to the protamine P1 family. In terms of tissue distribution, testis.

It is found in the nucleus. The protein localises to the chromosome. Its function is as follows. Protamines substitute for histones in the chromatin of sperm during the haploid phase of spermatogenesis. They compact sperm DNA into a highly condensed, stable and inactive complex. The protein is Sperm histone of Gallus gallus (Chicken).